The primary structure comprises 200 residues: Small ribosomal subunit protein uS4 (200 aa).

A disordered region spans residues 22-42 (TGKELEKRPYAPGPHGPNQRK). The S4 RNA-binding domain maps to 92 to 152 (ARLDNLVYRM…EKSNNLVVVK (61 aa)).

The protein belongs to the universal ribosomal protein uS4 family. Part of the 30S ribosomal subunit. Contacts protein S5. The interaction surface between S4 and S5 is involved in control of translational fidelity.

Functionally, one of the primary rRNA binding proteins, it binds directly to 16S rRNA where it nucleates assembly of the body of the 30S subunit. In terms of biological role, with S5 and S12 plays an important role in translational accuracy. The chain is Small ribosomal subunit protein uS4 from Bacillus cereus (strain Q1).